Reading from the N-terminus, the 510-residue chain is Serine/threonine-protein kinase RIO3 (510 aa).

Disordered stretches follow at residues 100-126 and 143-191; these read GSSS…ENED and DEEN…DMVG. Composition is skewed to basic and acidic residues over residues 108–118 and 162–179; these read TPDRYHPKTMQ and TKHD…KTFN. The Protein kinase domain maps to 235 to 510; that stretch reads LLLLKWINQG…RGISPAREYN (276 aa). ATP is bound by residues 241 to 249 and K275; that span reads INQGVFDSV. The Proton acceptor role is filled by D388. Residues 474–499 show a composition bias toward basic and acidic residues; it reads RSVDLRHDKSRPADMELKKYNEEKKA. Residues 474–510 form a disordered region; sequence RSVDLRHDKSRPADMELKKYNEEKKANRGISPAREYN.

This sequence belongs to the protein kinase superfamily. RIO-type Ser/Thr kinase family. Requires Mg(2+) as cofactor. As to expression, expressed in tail neurons (PVQ and PHAL/PQR).

The catalysed reaction is L-seryl-[protein] + ATP = O-phospho-L-seryl-[protein] + ADP + H(+). The enzyme catalyses L-threonyl-[protein] + ATP = O-phospho-L-threonyl-[protein] + ADP + H(+). This is Serine/threonine-protein kinase RIO3 (riok-3) from Caenorhabditis elegans.